Consider the following 132-residue polypeptide: Small ribosomal subunit protein uS8 (132 aa).

This sequence belongs to the universal ribosomal protein uS8 family. Part of the 30S ribosomal subunit. Contacts proteins S5 and S12.

One of the primary rRNA binding proteins, it binds directly to 16S rRNA central domain where it helps coordinate assembly of the platform of the 30S subunit. The chain is Small ribosomal subunit protein uS8 from Francisella tularensis subsp. tularensis (strain FSC 198).